A 371-amino-acid chain; its full sequence is F-box protein At2g26850 (371 aa).

Residues 59-105 (KMSILDLPDLPLDCILELLPPSELCTMARVCSSLRERCVSDHLWEKH) form the F-box domain.

This is F-box protein At2g26850 from Arabidopsis thaliana (Mouse-ear cress).